A 468-amino-acid polypeptide reads, in one-letter code: uncharacterized protein (468 aa).

A run of 6 helical transmembrane segments spans residues 59 to 79 (IPIVIIAVIYSSFIFFFALFI), 135 to 155 (TWINSILEILALIYSFLLLLV), 215 to 235 (VFPFTPCPLPLLLFPIFLSIL), 297 to 317 (THCCLNVFASSAFFVLLMVLV), 348 to 368 (HFIPLILTVVIELVITGLVSY), and 385 to 405 (VFTVMFTIIAVFRFVFIIILF).

It localises to the membrane. This is an uncharacterized protein from Caenorhabditis elegans.